Here is a 254-residue protein sequence, read N- to C-terminus: Ciliary microtubule associated protein 1A (254 aa).

2 STPGR repeats span residues Pro-180–Arg-205 and Pro-216–Lys-241. Residues Glu-207 to Val-226 are disordered.

It belongs to the CIMAP family. Microtubule inner protein component of sperm flagellar doublet microtubules. As to expression, testis-specific.

It localises to the cytoplasm. The protein localises to the cytoskeleton. Its subcellular location is the flagellum axoneme. In terms of biological role, outer dense fibers are filamentous structures located on the outside of the axoneme in the midpiece and principal piece of the mammalian sperm tail. May help to maintain the passive elastic structures and elastic recoil of the sperm tail. This Homo sapiens (Human) protein is Ciliary microtubule associated protein 1A.